The sequence spans 394 residues: Chalcone synthase 2 (394 aa).

Residue Cys-167 is part of the active site.

The protein belongs to the thiolase-like superfamily. Chalcone/stilbene synthases family.

It carries out the reaction (E)-4-coumaroyl-CoA + 3 malonyl-CoA + 3 H(+) = 2',4,4',6'-tetrahydroxychalcone + 3 CO2 + 4 CoA. Its pathway is secondary metabolite biosynthesis; flavonoid biosynthesis. The primary product of this enzyme is 4,2',4',6'-tetrahydroxychalcone (also termed naringenin-chalcone or chalcone) which can under specific conditions spontaneously isomerize into naringenin. The protein is Chalcone synthase 2 (CHS2) of Secale cereale (Rye).